A 361-amino-acid polypeptide reads, in one-letter code: Protein-L-isoaspartate O-methyltransferase domain-containing protein 2 (361 aa).

G2 carries N-myristoyl glycine lipidation. The active site involves S64. 3 adoMet binding motif regions span residues 85 to 94 (LNLGSGTGYL), 160 to 164 (YDRVY), and 181 to 191 (LKVGGILVMPL). Residues 240-250 (VRSLQDLARIA) form a BC-box region. The disordered stretch occupies residues 303–336 (SNPSDDNSCEDLEEERREEEEKTPPETKPDPPVN). A compositionally biased stretch (acidic residues) spans 309-320 (NSCEDLEEERRE). Positions 321–331 (EEEKTPPETKP) are enriched in basic and acidic residues. Positions 345–348 (LPLP) are CUL-box.

The protein belongs to the methyltransferase superfamily. L-isoaspartyl/D-aspartyl protein methyltransferase family.

The protein localises to the cytoplasm. Its function is as follows. May act as a substrate recognition component of an ECS (Elongin BC-CUL5-SOCS-box protein) E3 ubiquitin ligase complex which mediates the ubiquitination and subsequent proteasomal degradation of target proteins. May bind to the methyltransferase cofactor S-adenosylmethionine (AdoMet) via the N-terminal AdoMet binding motif, but probably does not display methyltransferase activity. The sequence is that of Protein-L-isoaspartate O-methyltransferase domain-containing protein 2 (PCMTD2) from Homo sapiens (Human).